We begin with the raw amino-acid sequence, 207 residues long: ATP synthase subunit delta (207 aa).

Belongs to the ATPase delta chain family. F-type ATPases have 2 components, F(1) - the catalytic core - and F(0) - the membrane proton channel. F(1) has five subunits: alpha(3), beta(3), gamma(1), delta(1), epsilon(1). F(0) has three main subunits: a(1), b(2) and c(10-14). The alpha and beta chains form an alternating ring which encloses part of the gamma chain. F(1) is attached to F(0) by a central stalk formed by the gamma and epsilon chains, while a peripheral stalk is formed by the delta and b chains.

It is found in the cell inner membrane. Its function is as follows. F(1)F(0) ATP synthase produces ATP from ADP in the presence of a proton or sodium gradient. F-type ATPases consist of two structural domains, F(1) containing the extramembraneous catalytic core and F(0) containing the membrane proton channel, linked together by a central stalk and a peripheral stalk. During catalysis, ATP synthesis in the catalytic domain of F(1) is coupled via a rotary mechanism of the central stalk subunits to proton translocation. In terms of biological role, this protein is part of the stalk that links CF(0) to CF(1). It either transmits conformational changes from CF(0) to CF(1) or is implicated in proton conduction. This chain is ATP synthase subunit delta, found in Psychrobacter cryohalolentis (strain ATCC BAA-1226 / DSM 17306 / VKM B-2378 / K5).